The primary structure comprises 321 residues: Biotin synthase (321 aa).

The Radical SAM core domain maps to 45–274; sequence FHGNRVDLCS…GALIRLCGGR (230 aa). Residues Cys-63, Cys-67, and Cys-70 each coordinate [4Fe-4S] cluster. 3 residues coordinate [2Fe-2S] cluster: Cys-139, Cys-199, and Arg-269.

The protein belongs to the radical SAM superfamily. Biotin synthase family. Homodimer. The cofactor is [4Fe-4S] cluster. [2Fe-2S] cluster serves as cofactor.

It carries out the reaction (4R,5S)-dethiobiotin + (sulfur carrier)-SH + 2 reduced [2Fe-2S]-[ferredoxin] + 2 S-adenosyl-L-methionine = (sulfur carrier)-H + biotin + 2 5'-deoxyadenosine + 2 L-methionine + 2 oxidized [2Fe-2S]-[ferredoxin]. It functions in the pathway cofactor biosynthesis; biotin biosynthesis; biotin from 7,8-diaminononanoate: step 2/2. In terms of biological role, catalyzes the conversion of dethiobiotin (DTB) to biotin by the insertion of a sulfur atom into dethiobiotin via a radical-based mechanism. This Pelotomaculum thermopropionicum (strain DSM 13744 / JCM 10971 / SI) protein is Biotin synthase.